Here is a 230-residue protein sequence, read N- to C-terminus: MPGPHSPNPGVGTNGPAPYPEPSSHEPQALDYPHDLGAAEPAFAPGPADDAALPPAAYPGVPPQVSYPKRRHKRLLIGIVVALALVSAMTAAIIYGVRTNGANTAGTFSEGPAKTAIQGYLNALENRDVDTIVRNALCGIHDGVRDKRSDQALAKLSSDAFRKQFSQVEVTSIDKIVYWSQYQAQVLFTMQVTPAAGGPPRGQVQGIAQLLFQRGQVLVCSYVLRTAGSY.

A disordered region spans residues 1 to 57 (MPGPHSPNPGVGTNGPAPYPEPSSHEPQALDYPHDLGAAEPAFAPGPADDAALPPAA). A compositionally biased stretch (low complexity) spans 38–55 (AAEPAFAPGPADDAALPP). A helical transmembrane segment spans residues 75 to 95 (LLIGIVVALALVSAMTAAIIY).

The protein resides in the membrane. This is an uncharacterized protein from Mycobacterium tuberculosis (strain CDC 1551 / Oshkosh).